The following is a 455-amino-acid chain: Fez family zinc finger protein 2 (455 aa).

The disordered stretch occupies residues 1 to 22 (MASSASLETMVPPACPRAGASP). An Engrailed homology 1 repressor motif is present at residues 27 to 42 (TLAFSIERIMAKTSEP). 6 consecutive C2H2-type zinc fingers follow at residues 272–294 (FTCE…MPVH), 300–322 (FVCK…KIIH), 328–350 (HKCN…IRIH), 356–378 (FVCE…KLTH), 384–406 (YKCT…MHTH), and 412–435 (FTCA…RKLH).

The protein belongs to the krueppel C2H2-type zinc-finger protein family. Highly expressed in neocortical layer V, moderately expressed in layer VI. Expressed in subcortically projecting neurons.

It is found in the nucleus. Functionally, transcription repressor. Required for the specification of corticospinal motor neurons and other subcerebral projection neurons. May play a role in layer and neuronal subtype-specific patterning of subcortical projections and axonal fasciculation. Controls the development of dendritic arborization and spines of large layer V pyramidal neurons. Plays a role in rostro-caudal patterning of the diencephalon and in prethalamic formation. This chain is Fez family zinc finger protein 2 (Fezf2), found in Mus musculus (Mouse).